The sequence spans 447 residues: Probable cytosol aminopeptidase (447 aa).

Mn(2+) contacts are provided by Lys218 and Asp223. Residue Lys230 is part of the active site. Residues Asp241, Asp300, and Glu302 each contribute to the Mn(2+) site. Residue Arg304 is part of the active site.

Belongs to the peptidase M17 family. Mn(2+) serves as cofactor.

It is found in the cytoplasm. The catalysed reaction is Release of an N-terminal amino acid, Xaa-|-Yaa-, in which Xaa is preferably Leu, but may be other amino acids including Pro although not Arg or Lys, and Yaa may be Pro. Amino acid amides and methyl esters are also readily hydrolyzed, but rates on arylamides are exceedingly low.. It carries out the reaction Release of an N-terminal amino acid, preferentially leucine, but not glutamic or aspartic acids.. Presumably involved in the processing and regular turnover of intracellular proteins. Catalyzes the removal of unsubstituted N-terminal amino acids from various peptides. This chain is Probable cytosol aminopeptidase (pepA), found in Mycoplasma genitalium (strain ATCC 33530 / DSM 19775 / NCTC 10195 / G37) (Mycoplasmoides genitalium).